The chain runs to 184 residues: Peptide deformylase (184 aa).

Residues Cys111 and His154 each contribute to the Fe cation site. Glu155 is an active-site residue. His158 contributes to the Fe cation binding site.

Belongs to the polypeptide deformylase family. Fe(2+) serves as cofactor.

It carries out the reaction N-terminal N-formyl-L-methionyl-[peptide] + H2O = N-terminal L-methionyl-[peptide] + formate. Functionally, removes the formyl group from the N-terminal Met of newly synthesized proteins. Requires at least a dipeptide for an efficient rate of reaction. N-terminal L-methionine is a prerequisite for activity but the enzyme has broad specificity at other positions. This is Peptide deformylase from Lactobacillus delbrueckii subsp. bulgaricus (strain ATCC 11842 / DSM 20081 / BCRC 10696 / JCM 1002 / NBRC 13953 / NCIMB 11778 / NCTC 12712 / WDCM 00102 / Lb 14).